The sequence spans 521 residues: Insulinoma-associated protein 1 (521 aa).

Positions Met-1–Lys-12 are enriched in basic residues. Positions Met-1–Val-20 are SNAG domain. Disordered stretches follow at residues Met-1 to Leu-59, Gly-76 to Pro-107, and Ala-180 to Ala-230. The segment at Pro-2–Val-7 is required and sufficient for interaction with KDM1A. Positions Pro-43–Pro-56 are necessary for interaction with CCND1. Composition is skewed to pro residues over residues Pro-43–Ala-58 and Gly-76–Pro-85. Residues Ala-209 to Pro-223 are compositionally biased toward low complexity. The segment at Phe-272 to Cys-292 adopts a C2H2-type 1; atypical zinc-finger fold. The segment at Tyr-300–His-322 adopts a C2H2-type 2 zinc-finger fold. Residues Arg-320–Glu-369 form a disordered region. Residues Pro-334–Glu-346 are compositionally biased toward basic and acidic residues. The segment at Tyr-373–His-395 adopts a C2H2-type 3 zinc-finger fold. The tract at residues Ala-398–Leu-419 is disordered. A compositionally biased stretch (pro residues) spans Ala-404 to Ala-415. 2 C2H2-type zinc fingers span residues His-452 to His-475 and Phe-480 to His-503.

The protein belongs to the INSM1 family. As to quaternary structure, interacts (via the N-terminal region) with CCND1 (via cyclin N-terminal domain); the interaction competes with the binding of CCND1 to CDK4 during cell cycle progression and increases its transcriptional repressor activity. Interacts with HDAC3; the interaction increases its transcriptional repressor activity. Interacts (via the SNAG domain) with HDAC1. Interacts (via the SNAG domain) with HDAC2. Interacts (via the SNAG domain) with KDM1A. Interacts (via the SNAG domain) with RCOR1. Interacts with SORBS1. As to expression, expressed in adrenal gland. Expressed in the dentate gyrus of the hippocampus and the wall of the lateral ventricle. Expressed in pancreatic and intestinal endocrine cells.

It is found in the nucleus. Functionally, sequence-specific DNA-binding transcriptional regulator that plays a key role in neurogenesis and neuroendocrine cell differentiation during embryonic and/or fetal development. Binds to the consensus sequence 5'-[TG][TC][TC][TT][GA]GGG[CG]A-3' in target promoters. Acts as a transcriptional repressor of NEUROD1 and INS expression via its interaction with cyclin CCND1 in a cell cycle-independent manner. Negatively regulates skeletal muscle-specific gene expression in endocrine cells of the pituitary by inhibiting the Notch signaling pathway. Represses target gene transcription by recruiting chromatin-modifying factors, such as HDAC1, HDAC2, HDAC3, KDM1A and RCOR1 histone deacetylases. Binds to its own promoter, suggesting autoregulation as a self-control feedback mechanism. Competes with histone H3 for the same binding site on the histone demethylase complex formed by KDM1A and RCOR1, and thereby inhibits demethylation of histone H3 at 'Lys-4'. Promotes the generation and expansion of neuronal basal progenitor cells in the developing neocortex. Involved in the differentiation of endocrine cells of the developing anterior pituitary gland, of the pancreas and intestine, and of sympatho-adrenal cells in the peripheral nervous system. Promotes cell cycle signaling arrest and inhibition of cellular proliferation. This chain is Insulinoma-associated protein 1 (Insm1), found in Mus musculus (Mouse).